Consider the following 492-residue polypeptide: Transcript termination protein OPG145 (492 aa).

In terms of domain architecture, Helicase ATP-binding spans 100 to 256; the sequence is MIELKRPLYI…NSIINIAKLS (157 aa). 113 to 120 provides a ligand contact to ATP; it reads LACGFGKT. The DEAH box motif lies at 206–209; it reads DESH.

The protein belongs to the helicase family. Poxviruses subfamily. Interacts with OPG087. Might be part of a transcription complex composed at least of OPG087, OPG110, and OPG145.

The protein resides in the virion. DNA helicase which seems to act as a postreplicative transcription termination factor. Involved in ATP-dependent release of nascent RNA. Forms a stable complex with single-stranded DNA, and to a lesser extent RNA. This is Transcript termination protein OPG145 (OPG145) from Cynomys gunnisoni (Gunnison's prairie dog).